The following is a 109-amino-acid chain: Iron-sulfur cluster assembly protein CyaY (109 aa).

Belongs to the frataxin family.

In terms of biological role, involved in iron-sulfur (Fe-S) cluster assembly. May act as a regulator of Fe-S biogenesis. This chain is Iron-sulfur cluster assembly protein CyaY, found in Bordetella pertussis (strain Tohama I / ATCC BAA-589 / NCTC 13251).